A 318-amino-acid chain; its full sequence is ADP-L-glycero-D-manno-heptose-6-epimerase (318 aa).

NADP(+) contacts are provided by residues 10–11, 31–32, K38, K53, and 79–83; these read FI, DD, and EGACS. Residue Y144 is the Proton acceptor of the active site. NADP(+) is bound at residue K148. Position 173 (N173) interacts with substrate. Residues V174 and K182 each coordinate NADP(+). The Proton acceptor role is filled by K182. Residues S184, H191, 205–208, R218, and Y282 each bind substrate; that span reads FEGC.

It belongs to the NAD(P)-dependent epimerase/dehydratase family. HldD subfamily. As to quaternary structure, homopentamer. Requires NADP(+) as cofactor.

The catalysed reaction is ADP-D-glycero-beta-D-manno-heptose = ADP-L-glycero-beta-D-manno-heptose. It participates in nucleotide-sugar biosynthesis; ADP-L-glycero-beta-D-manno-heptose biosynthesis; ADP-L-glycero-beta-D-manno-heptose from D-glycero-beta-D-manno-heptose 7-phosphate: step 4/4. Its function is as follows. Catalyzes the interconversion between ADP-D-glycero-beta-D-manno-heptose and ADP-L-glycero-beta-D-manno-heptose via an epimerization at carbon 6 of the heptose. This Aeromonas hydrophila subsp. hydrophila (strain ATCC 7966 / DSM 30187 / BCRC 13018 / CCUG 14551 / JCM 1027 / KCTC 2358 / NCIMB 9240 / NCTC 8049) protein is ADP-L-glycero-D-manno-heptose-6-epimerase.